Consider the following 520-residue polypeptide: Bile acid--coenzyme A ligase (520 aa).

The protein belongs to the ATP-dependent AMP-binding enzyme family. Homodimer. The cofactor is Mg(2+).

It catalyses the reaction cholate + ATP + CoA = choloyl-CoA + AMP + diphosphate. The catalysed reaction is deoxycholate + ATP + CoA = deoxycholoyl-CoA + AMP + diphosphate. The enzyme catalyses chenodeoxycholate + ATP + CoA = chenodeoxycholoyl-CoA + AMP + diphosphate. It functions in the pathway lipid metabolism; bile acid biosynthesis. With respect to regulation, inhibited by diphosphate. Its function is as follows. Functions in the bile acid 7alpha-dehydroxylation pathway, which forms secondary bile acids via the 7alpha-dehydroxylation of primary bile acids, and is carried out by intestinal anaerobic bacteria. Catalyzes the initial step in this pathway, i.e. the ATP-dependent thioesterification of primary bile acids with coenzyme A. Is active with C-24 bile acids with free carboxyl groups such as cholate, deoxycholate and chenodeoxycholate. Produces AMP and pyrophosphate in addition to the bile acid-CoA thioester. The protein is Bile acid--coenzyme A ligase of Clostridium scindens (strain JCM 10418 / VPI 12708).